The primary structure comprises 211 residues: ATP phosphoribosyltransferase (211 aa).

This sequence belongs to the ATP phosphoribosyltransferase family. Short subfamily. In terms of assembly, heteromultimer composed of HisG and HisZ subunits.

It localises to the cytoplasm. The catalysed reaction is 1-(5-phospho-beta-D-ribosyl)-ATP + diphosphate = 5-phospho-alpha-D-ribose 1-diphosphate + ATP. It participates in amino-acid biosynthesis; L-histidine biosynthesis; L-histidine from 5-phospho-alpha-D-ribose 1-diphosphate: step 1/9. Functionally, catalyzes the condensation of ATP and 5-phosphoribose 1-diphosphate to form N'-(5'-phosphoribosyl)-ATP (PR-ATP). Has a crucial role in the pathway because the rate of histidine biosynthesis seems to be controlled primarily by regulation of HisG enzymatic activity. The chain is ATP phosphoribosyltransferase from Pseudomonas savastanoi pv. phaseolicola (strain 1448A / Race 6) (Pseudomonas syringae pv. phaseolicola (strain 1448A / Race 6)).